The primary structure comprises 125 residues: Fumarate reductase subunit D (125 aa).

The next 3 membrane-spanning stretches (helical) occupy residues 29 to 49 (VTAL…PLGW), 64 to 84 (NPIT…HAAH), and 102 to 122 (VIAL…GWML).

Belongs to the FrdD family. As to quaternary structure, part of an enzyme complex containing four subunits: a flavoprotein (FrdA), an iron-sulfur protein (FrdB), and two hydrophobic anchor proteins (FrdC and FrdD).

It is found in the cell membrane. Functionally, anchors the catalytic components of the fumarate reductase complex to the cell membrane, binds quinones. The sequence is that of Fumarate reductase subunit D from Mycobacterium bovis (strain BCG / Tokyo 172 / ATCC 35737 / TMC 1019).